The chain runs to 76 residues: Small ribosomal subunit protein bS16 (76 aa).

The protein belongs to the bacterial ribosomal protein bS16 family.

The protein is Small ribosomal subunit protein bS16 of Helicobacter pylori (strain P12).